The sequence spans 557 residues: Inositol-3-phosphate synthase 1 (557 aa).

The NAD(+) site is built by glycine 67, glycine 68, asparagine 69, asparagine 70, aspartate 141, serine 177, valine 178, glutamine 188, arginine 191, threonine 228, alanine 229, asparagine 230, threonine 231, glycine 278, serine 279, aspartate 303, serine 306, asparagine 337, asparagine 338, aspartate 339, and lysine 352. Serine 279 bears the Phosphoserine mark. A Phosphoserine modification is found at serine 357. The NAD(+) site is built by glycine 390, aspartate 391, aspartate 419, and serine 420. The disordered stretch occupies residues 512 to 557; sequence GPGIKPGEVVATSPLPCKKEPTPATNGCTGDANGHPQAPTPKLSTA. Serine 524 bears the Phosphoserine mark.

It belongs to the myo-inositol 1-phosphate synthase family. NAD(+) is required as a cofactor. In testis, it is expressed in Sertoli cells. Highly expressed in 2 types of germ cells, pachytene spermatocytes and round spermatids.

The protein resides in the cytoplasm. It catalyses the reaction D-glucose 6-phosphate = 1D-myo-inositol 3-phosphate. The protein operates within polyol metabolism; myo-inositol biosynthesis; myo-inositol from D-glucose 6-phosphate: step 1/2. Its function is as follows. Key enzyme in myo-inositol biosynthesis pathway that catalyzes the conversion of glucose 6-phosphate to 1-myo-inositol 1-phosphate in a NAD-dependent manner. Rate-limiting enzyme in the synthesis of all inositol-containing compounds. This is Inositol-3-phosphate synthase 1 (Isyna1) from Mus musculus (Mouse).